The sequence spans 200 residues: uncharacterized protein (200 aa).

A helical membrane pass occupies residues 7–29 (FFFLFSFISHAMMLTGLIGSSSF).

It is found in the membrane. This is an uncharacterized protein from Saccharomyces cerevisiae (strain ATCC 204508 / S288c) (Baker's yeast).